Here is a 428-residue protein sequence, read N- to C-terminus: GTPase Obg (428 aa).

One can recognise an Obg domain in the interval 1-158 (MFVDQVKIYV…RDVILELKVL (158 aa)). The OBG-type G domain occupies 159 to 329 (ADVGLVGFPS…LLFEVANLIE (171 aa)). GTP is bound by residues 165–172 (GFPSVGKS), 190–194 (FTTIV), 212–215 (DLPG), 282–285 (NKMD), and 310–312 (SAV). Mg(2+) contacts are provided by Ser-172 and Thr-192. The OCT domain occupies 350–428 (KFDTEGVKFE…ILEYEFEFID (79 aa)).

Belongs to the TRAFAC class OBG-HflX-like GTPase superfamily. OBG GTPase family. As to quaternary structure, monomer. It depends on Mg(2+) as a cofactor.

It is found in the cytoplasm. Its function is as follows. An essential GTPase which binds GTP, GDP and possibly (p)ppGpp with moderate affinity, with high nucleotide exchange rates and a fairly low GTP hydrolysis rate. Plays a role in control of the cell cycle, stress response, ribosome biogenesis and in those bacteria that undergo differentiation, in morphogenesis control. In Bacillus cereus (strain ATCC 14579 / DSM 31 / CCUG 7414 / JCM 2152 / NBRC 15305 / NCIMB 9373 / NCTC 2599 / NRRL B-3711), this protein is GTPase Obg.